The sequence spans 246 residues: Receptor-transporting protein 4 (246 aa).

Residues Met1–Asp224 lie on the Cytoplasmic side of the membrane. The 3CxxC-type zinc-finger motif lies at Arg48–Leu159. A helical membrane pass occupies residues Pro225–Ser245.

The protein belongs to the TMEM7 family. Interacts with TASR16. Interacts with OPRD1 and OPRM1; the interaction promotes cell surface localization of the OPDR1-OPRM1 heterodimer. As to quaternary structure, (Microbial infection) Interacts with influenza A virus protein NS1; this interaction sequesters NS1 from interacting with RIG-I/DDX58 to restore antiviral signaling. As to expression, expressed in circumvallate papillae and testis.

Its subcellular location is the membrane. It localises to the cytoplasm. Its function is as follows. Chaperone protein that facilitates the trafficking and functional cell surface expression of some G-protein coupled receptors (GPCRs). Promotes functional expression of the bitter taste receptor TAS2R16. Also promotes functional expression of the opioid receptor heterodimer OPRD1-OPRM1. In addition, acts as a potent IFN-inducible suppressor of pathogens including lyssavirus rabies, influenza A or yellow fever virus. Mechanistically, associates with the viral replicase, binds viral RNA, and thereby suppresses viral genome amplification that replicates at the endoplasmic reticulum. In addition, restores antiviral signaling by interacting with and sequestering influenza A virus protein NS1. In Homo sapiens (Human), this protein is Receptor-transporting protein 4 (RTP4).